The following is a 260-amino-acid chain: 5'-nucleotidase SurE (260 aa).

A divalent metal cation-binding residues include Asp8, Asp9, Ser39, and Asn96.

It belongs to the SurE nucleotidase family. Requires a divalent metal cation as cofactor.

Its subcellular location is the cytoplasm. The enzyme catalyses a ribonucleoside 5'-phosphate + H2O = a ribonucleoside + phosphate. Its function is as follows. Nucleotidase that shows phosphatase activity on nucleoside 5'-monophosphates. The polypeptide is 5'-nucleotidase SurE (Moorella thermoacetica (strain ATCC 39073 / JCM 9320)).